We begin with the raw amino-acid sequence, 427 residues long: Histidinol dehydrogenase (427 aa).

NAD(+) contacts are provided by Tyr-125, Gln-186, and Asn-209. Substrate is bound by residues Ser-234, Gln-256, and His-259. Zn(2+)-binding residues include Gln-256 and His-259. Active-site proton acceptor residues include Glu-325 and His-326. 4 residues coordinate substrate: His-326, Asp-359, Glu-413, and His-419. Residue Asp-359 coordinates Zn(2+). His-419 contributes to the Zn(2+) binding site.

It belongs to the histidinol dehydrogenase family. The cofactor is Zn(2+).

It carries out the reaction L-histidinol + 2 NAD(+) + H2O = L-histidine + 2 NADH + 3 H(+). It participates in amino-acid biosynthesis; L-histidine biosynthesis; L-histidine from 5-phospho-alpha-D-ribose 1-diphosphate: step 9/9. Functionally, catalyzes the sequential NAD-dependent oxidations of L-histidinol to L-histidinaldehyde and then to L-histidine. This is Histidinol dehydrogenase from Leptospira interrogans serogroup Icterohaemorrhagiae serovar copenhageni (strain Fiocruz L1-130).